Consider the following 325-residue polypeptide: uncharacterized protein (325 aa).

The first 26 residues, 1-26 (MQGRVAGSCAPLGLLLVCLHLPGLFA), serve as a signal peptide directing secretion. A compositionally biased stretch (polar residues) spans 41–60 (GTNLPQLGQPSSTGPSNSEH). Disordered stretches follow at residues 41–110 (GTNL…MDSW) and 147–189 (GSGP…AGGK). Over residues 147–157 (GSGPLPGESSP) the composition is skewed to low complexity.

Binds to numerous extracellular matrix proteins. As to expression, expressed in skin and tonsils.

It is found in the secreted. The protein resides in the extracellular space. It localises to the extracellular matrix. This is an uncharacterized protein from Homo sapiens (Human).